Consider the following 836-residue polypeptide: Protein translocase subunit SecA (836 aa).

ATP-binding positions include Gln85, 103–107, and Asp492; that span reads GEGKT. Residues 786 to 817 form a disordered region; it reads REQVAKETSTNQGGDDTLKKQPIKKEPKIGRN. Over residues 801–816 the composition is skewed to basic and acidic residues; the sequence is DTLKKQPIKKEPKIGR. The Zn(2+) site is built by Cys820, Cys822, Cys831, and Cys832.

This sequence belongs to the SecA family. Monomer and homodimer. Part of the essential Sec protein translocation apparatus which comprises SecA, SecYEG and auxiliary proteins SecDF. Other proteins may also be involved. Zn(2+) serves as cofactor.

The protein resides in the cell membrane. It is found in the cytoplasm. The enzyme catalyses ATP + H2O + cellular proteinSide 1 = ADP + phosphate + cellular proteinSide 2.. Functionally, part of the Sec protein translocase complex. Interacts with the SecYEG preprotein conducting channel. Has a central role in coupling the hydrolysis of ATP to the transfer of proteins into and across the cell membrane, serving as an ATP-driven molecular motor driving the stepwise translocation of polypeptide chains across the membrane. In Clostridium tetani (strain Massachusetts / E88), this protein is Protein translocase subunit SecA.